A 210-amino-acid chain; its full sequence is Ras-related protein Rab-2-B (210 aa).

13–21 provides a ligand contact to GTP; the sequence is GDTGVGKSC. An Effector region motif is present at residues 35 to 43; it reads HDLTIGVEF. GTP-binding positions include 61-65, 119-122, and 149-151; these read DTAGQ, NKCD, and SAK. 2 S-geranylgeranyl cysteine lipidation sites follow: cysteine 208 and cysteine 209.

Belongs to the small GTPase superfamily. Rab family.

The protein localises to the endoplasmic reticulum membrane. Its subcellular location is the golgi apparatus membrane. Functionally, protein transport. Probably involved in vesicular traffic. The polypeptide is Ras-related protein Rab-2-B (RAB2B) (Zea mays (Maize)).